Here is a 245-residue protein sequence, read N- to C-terminus: Derlin-1 (245 aa).

The Cytoplasmic portion of the chain corresponds to 1-5; that stretch reads MDLEN. A helical membrane pass occupies residues 6-26; that stretch reads FLLGIPIVTRYWFLASTIIPL. Residues 27 to 57 are Lumenal-facing; the sequence is LGRFGFINVQWMFLQWDLVVNKFQFWRPLTA. Residues 58–78 traverse the membrane as a helical segment; that stretch reads LIYYPVTPQTGFHWLMMCYFL. The Cytoplasmic segment spans residues 79-100; the sequence is YNYSKALESETYRGRSADYLFM. The chain crosses the membrane as a helical span at residues 101-121; that stretch reads LIFNWFFCSGLCMALDIYFLL. The Lumenal portion of the chain corresponds to 122 to 166; that stretch reads EPMVISVLYVWCQVNKDTIVSFWFGMRFPARYLPWVLWGFNAVLR. Residues 167–187 traverse the membrane as a helical segment; that stretch reads GGGTNELVGILVGHAYFFVAL. Over 188–245 the chain is Cytoplasmic; sequence KYPDEYGVDLISTPEFLHRLIPDEDGGIHGQDGNIRGARQQPRGHQWPGGVGARLGGN. The segment at 218–245 is disordered; sequence QDGNIRGARQQPRGHQWPGGVGARLGGN. Over residues 234 to 245 the composition is skewed to gly residues; the sequence is WPGGVGARLGGN.

The protein belongs to the derlin family.

The protein localises to the endoplasmic reticulum membrane. Specifically required for the degradation process of misfolded endoplasmic reticulum (ER) luminal proteins. Participates in the transfer of misfolded proteins from the ER to the cytosol, where they are destroyed by the proteasome in a ubiquitin-dependent manner. This is Derlin-1 from Caenorhabditis elegans.